The sequence spans 185 residues: ATP synthase subunit b, chloroplastic (185 aa).

A helical transmembrane segment spans residues 31-49; the sequence is LINSGVVLGLPVYSGKGVL.

The protein belongs to the ATPase B chain family. In terms of assembly, F-type ATPases have 2 components, F(1) - the catalytic core - and F(0) - the membrane proton channel. F(1) has five subunits: alpha(3), beta(3), gamma(1), delta(1), epsilon(1). F(0) has four main subunits: a(1), b(1), b'(1) and c(10-14). The alpha and beta chains form an alternating ring which encloses part of the gamma chain. F(1) is attached to F(0) by a central stalk formed by the gamma and epsilon chains, while a peripheral stalk is formed by the delta, b and b' chains.

The protein resides in the plastid. It localises to the chloroplast thylakoid membrane. Its function is as follows. F(1)F(0) ATP synthase produces ATP from ADP in the presence of a proton or sodium gradient. F-type ATPases consist of two structural domains, F(1) containing the extramembraneous catalytic core and F(0) containing the membrane proton channel, linked together by a central stalk and a peripheral stalk. During catalysis, ATP synthesis in the catalytic domain of F(1) is coupled via a rotary mechanism of the central stalk subunits to proton translocation. Component of the F(0) channel, it forms part of the peripheral stalk, linking F(1) to F(0). The chain is ATP synthase subunit b, chloroplastic from Huperzia lucidula (Shining clubmoss).